We begin with the raw amino-acid sequence, 274 residues long: Small ribosomal subunit protein uS2 (274 aa).

Belongs to the universal ribosomal protein uS2 family.

This Syntrophobacter fumaroxidans (strain DSM 10017 / MPOB) protein is Small ribosomal subunit protein uS2.